Consider the following 220-residue polypeptide: Ripening-related protein grip22 (220 aa).

A signal peptide spans 1 to 27 (MAKSALVWLASVCLVFNILSLPFLALG).

This sequence belongs to the kiwellin family. Expressed in ripening fruits.

It localises to the secreted. This chain is Ripening-related protein grip22 (grip22), found in Vitis vinifera (Grape).